Here is a 372-residue protein sequence, read N- to C-terminus: Glutamate 5-kinase (372 aa).

Lys14 contacts ATP. The substrate site is built by Ser54, Asp141, and Asn153. ATP is bound by residues 173-174 and 215-221; these read TD and TGGMATK. The 79-residue stretch at 280 to 358 folds into the PUA domain; it reads RGKLILDQGA…DDIESLLGYD (79 aa).

It belongs to the glutamate 5-kinase family.

Its subcellular location is the cytoplasm. The enzyme catalyses L-glutamate + ATP = L-glutamyl 5-phosphate + ADP. It participates in amino-acid biosynthesis; L-proline biosynthesis; L-glutamate 5-semialdehyde from L-glutamate: step 1/2. Its function is as follows. Catalyzes the transfer of a phosphate group to glutamate to form L-glutamate 5-phosphate. In Shewanella sediminis (strain HAW-EB3), this protein is Glutamate 5-kinase.